Consider the following 212-residue polypeptide: Adenylate kinase (212 aa).

Residue 10–15 (GAGKGT) participates in ATP binding. The segment at 30 to 59 (STGDMFRAAIANQTEMGVLAKSYIDKGELV) is NMP. AMP is bound by residues threonine 31, arginine 36, 57 to 59 (ELV), 86 to 89 (GYPR), and glutamine 93. Positions 127-159 (GRIIHRETGETFHKVFNPPADYKEEDYYQREDD) are LID. Residues arginine 128 and 137-138 (TF) contribute to the ATP site. 2 residues coordinate AMP: arginine 156 and arginine 167. Residue glutamine 195 coordinates ATP.

It belongs to the adenylate kinase family. Monomer.

It is found in the cytoplasm. It catalyses the reaction AMP + ATP = 2 ADP. It participates in purine metabolism; AMP biosynthesis via salvage pathway; AMP from ADP: step 1/1. In terms of biological role, catalyzes the reversible transfer of the terminal phosphate group between ATP and AMP. Plays an important role in cellular energy homeostasis and in adenine nucleotide metabolism. This Streptococcus sanguinis (strain SK36) protein is Adenylate kinase.